A 476-amino-acid chain; its full sequence is tRNA(Ile)-lysidine synthase (476 aa).

An ATP-binding site is contributed by 30–35 (SGGPDS).

This sequence belongs to the tRNA(Ile)-lysidine synthase family.

It is found in the cytoplasm. It catalyses the reaction cytidine(34) in tRNA(Ile2) + L-lysine + ATP = lysidine(34) in tRNA(Ile2) + AMP + diphosphate + H(+). In terms of biological role, ligates lysine onto the cytidine present at position 34 of the AUA codon-specific tRNA(Ile) that contains the anticodon CAU, in an ATP-dependent manner. Cytidine is converted to lysidine, thus changing the amino acid specificity of the tRNA from methionine to isoleucine. The polypeptide is tRNA(Ile)-lysidine synthase (Bacillus anthracis).